We begin with the raw amino-acid sequence, 376 residues long: Arabinogalactan endo-beta-1,4-galactanase (376 aa).

An N-terminal signal peptide occupies residues 1-17 (MKKKILAATAILLAAIA). Glutamate 161 acts as the Proton donor in catalysis. Glutamate 270 acts as the Nucleophile in catalysis. Ca(2+) contacts are provided by aspartate 281 and asparagine 285.

The protein belongs to the glycosyl hydrolase 53 family. The cofactor is Ca(2+).

The catalysed reaction is The enzyme specifically hydrolyzes (1-&gt;4)-beta-D-galactosidic linkages in type I arabinogalactans.. The chain is Arabinogalactan endo-beta-1,4-galactanase (ganB) from Cellvibrio japonicus (strain Ueda107) (Pseudomonas fluorescens subsp. cellulosa).